The following is a 504-amino-acid chain: Multidrug efflux pump LfrA (504 aa).

Helical transmembrane passes span 19–39 (WVAL…NTVL), 58–78 (LWIV…MGSL), 87–107 (LLLI…FAPS), 110–130 (LLVG…PSTL), 145–165 (LAIA…PIVG), 172–192 (FHWG…LVLG), 206–226 (PFDP…VWAV), 233–253 (GLSA…ALFV), 275–295 (TSSI…IFFI), 309–329 (TAGL…LAVV), 338–358 (DTLM…ILLF), 361–381 (NLTV…VGVS), 408–428 (AYEL…TAFY), and 480–500 (IAPT…VVGV).

The protein belongs to the major facilitator superfamily.

It is found in the cell inner membrane. Its activity is regulated as follows. Inhibited by the protonophore carbonyl cyanide m-chorophenylhydrazone (CCCP). Ethidium bromide efflux is inhibited by chlorpromazine, thioridazine and verapamil. Energy-dependent efflux pump that contributes to drug resistance. Catalyzes the efflux of norfloxacin and several related fluoroquinolones (FQ). Contributes significantly to the intrinsic MICs for ethidium bromide and acriflavine. Overexpression confers low-level resistance to hydrophilic FQ such as ciprofloxacin, ofloxacin and levofloxacin, and to ethidium bromide, acridine, acriflavine, rhodamine 123 and some quaternary ammonium compounds. May contribute to resistance to certain beta-lactams. Probably uses the proton motive force to export drugs. In Mycolicibacterium smegmatis (strain ATCC 700084 / mc(2)155) (Mycobacterium smegmatis), this protein is Multidrug efflux pump LfrA.